We begin with the raw amino-acid sequence, 220 residues long: ATP-dependent Clp protease proteolytic subunit 1 (220 aa).

Residue serine 118 is the Nucleophile of the active site. The active site involves histidine 143.

Belongs to the peptidase S14 family. As to quaternary structure, fourteen ClpP subunits assemble into 2 heptameric rings which stack back to back to give a disk-like structure with a central cavity, resembling the structure of eukaryotic proteasomes.

The protein resides in the cytoplasm. The catalysed reaction is Hydrolysis of proteins to small peptides in the presence of ATP and magnesium. alpha-casein is the usual test substrate. In the absence of ATP, only oligopeptides shorter than five residues are hydrolyzed (such as succinyl-Leu-Tyr-|-NHMec, and Leu-Tyr-Leu-|-Tyr-Trp, in which cleavage of the -Tyr-|-Leu- and -Tyr-|-Trp bonds also occurs).. Cleaves peptides in various proteins in a process that requires ATP hydrolysis. Has a chymotrypsin-like activity. Plays a major role in the degradation of misfolded proteins. This Rhodococcus jostii (strain RHA1) protein is ATP-dependent Clp protease proteolytic subunit 1.